The sequence spans 242 residues: Type III pantothenate kinase (242 aa).

7 to 14 provides a ligand contact to ATP; the sequence is DLGNSRFK. Substrate-binding positions include Y91 and 98–101; that span reads GVDR. The Proton acceptor role is filled by D100. T121 is a binding site for ATP. Position 171 (T171) interacts with substrate.

This sequence belongs to the type III pantothenate kinase family. In terms of assembly, homodimer. NH4(+) serves as cofactor. Requires K(+) as cofactor.

Its subcellular location is the cytoplasm. The enzyme catalyses (R)-pantothenate + ATP = (R)-4'-phosphopantothenate + ADP + H(+). It participates in cofactor biosynthesis; coenzyme A biosynthesis; CoA from (R)-pantothenate: step 1/5. Functionally, catalyzes the phosphorylation of pantothenate (Pan), the first step in CoA biosynthesis. The protein is Type III pantothenate kinase of Xanthomonas oryzae pv. oryzae (strain MAFF 311018).